A 449-amino-acid polypeptide reads, in one-letter code: N-succinylarginine dihydrolase (449 aa).

Substrate is bound by residues 19-28 (GGLSYGNVAS), asparagine 110, and 137-138 (HR). A disordered region spans residues 23–43 (YGNVASQSNSQQGSNPREAAR). Residues 25–37 (NVASQSNSQQGSN) are compositionally biased toward polar residues. The active site involves glutamate 174. Arginine 214 is a binding site for substrate. Histidine 250 is an active-site residue. Substrate-binding residues include aspartate 252 and asparagine 365. Cysteine 371 serves as the catalytic Nucleophile.

This sequence belongs to the succinylarginine dihydrolase family. In terms of assembly, homodimer.

The catalysed reaction is N(2)-succinyl-L-arginine + 2 H2O + 2 H(+) = N(2)-succinyl-L-ornithine + 2 NH4(+) + CO2. Its pathway is amino-acid degradation; L-arginine degradation via AST pathway; L-glutamate and succinate from L-arginine: step 2/5. In terms of biological role, catalyzes the hydrolysis of N(2)-succinylarginine into N(2)-succinylornithine, ammonia and CO(2). The chain is N-succinylarginine dihydrolase from Pseudomonas putida (strain GB-1).